The sequence spans 94 residues: MMASTSNDEEKLISTTDKYFIEQRNIVLQEINETMNSILNGLNGLNISLESSIAVGREFQSVSDLWKTLYDGLESLSDEAPIDEQPTLSQSKTK.

The residue at position 91 (serine 91) is a Phosphoserine.

This sequence belongs to the DASH complex DAD1 family. In terms of assembly, component of the DASH complex consisting of ASK1, DAD1, DAD2, DAD3, DAD4, DAM1, DUO1, HSK3, SPC19 and SPC34, with a stoichiometry of one copy of each subunit per complex. Multiple DASH complexes oligomerize to form a ring that encircles spindle microtubules and organizes the rod-like NDC80 complexes of the outer kinetochore. DASH complex oligomerization strengthens microtubule attachments. On cytoplasmic microtubules, DASH complexes appear to form patches instead of rings.

Its subcellular location is the nucleus. It is found in the cytoplasm. The protein localises to the cytoskeleton. The protein resides in the spindle. It localises to the chromosome. Its subcellular location is the centromere. It is found in the kinetochore. Component of the DASH complex that connects microtubules with kinetochores and couples microtubule depolymerisation to chromosome movement; it is involved in retrieving kinetochores to the spindle poles before their re-orientation on the spindle in early mitosis and allows microtubule depolymerization to pull chromosomes apart and resist detachment during anaphase. Kinetochores, consisting of a centromere-associated inner segment and a microtubule-contacting outer segment, play a crucial role in chromosome segregation by mediating the physical connection between centromeric DNA and microtubules. Kinetochores also serve as an input point for the spindle assembly checkpoint, which delays anaphase until all chromosomes have bioriented on the mitotic spindle. During spindle-kinetochore attachment, kinetochores first attach to the lateral surface of spindle microtubules, which supports the congression of chromosomes toward the middle of the dividing cell; they then slide along towards the spindle pole, a process independent of the DASH complex but requiring the NDC80 complex. When the end of a disassembling microtubule reaches the laterally attached kinetochore, the DASH complex together with the NDC80 complex and STU2 convert lateral attachment to end-on capture to produce a structure that can track with microtubule shortening and sustain attachment when tension is applied across sister kinetochores upon their biorientation. Microtubule depolymerization proceeds by protofilament splaying and induces the kinetochore-attached DASH complex to slide longitudinally, thereby helping to transduce depolymerization energy into pulling forces to disjoin chromatids. Incorrect microtubule attachments are corrected by releasing microubules from the kinetochore through phosphorylation by IPL1 of kinetochore components. Links the microtubule cytoskeleton to chromosomes during interphase. Also contributes to the poleward transport of kinetochores on microtubules following centromeric DNA replication in S-phase. The polypeptide is DASH complex subunit DAD1 (DAD1) (Saccharomyces cerevisiae (strain ATCC 204508 / S288c) (Baker's yeast)).